The following is a 444-amino-acid chain: Putative cytochrome P450 120 (444 aa).

C391 contributes to the heme binding site.

The protein belongs to the cytochrome P450 family. Heme serves as cofactor.

This Synechocystis sp. (strain ATCC 27184 / PCC 6803 / Kazusa) protein is Putative cytochrome P450 120 (cyp120).